Here is a 200-residue protein sequence, read N- to C-terminus: Probable UbiX-like flavin prenyltransferase (200 aa).

Residues 9–11 (GAT), Ser36, 87–90 (SMKT), and Arg122 contribute to the FMN site.

Belongs to the UbiX/PAD1 family. YclB subfamily. In terms of assembly, homododecamer.

The enzyme catalyses dimethylallyl phosphate + FMNH2 = prenylated FMNH2 + phosphate. Its function is as follows. Involved in the non-oxidative decarboxylation and detoxification of phenolic derivatives under both aerobic and anaerobic conditions. Flavin prenyltransferase that catalyzes the synthesis of the prenylated FMN cofactor (prenyl-FMN) for phenolic acid decarboxylase. This is Probable UbiX-like flavin prenyltransferase from Streptomyces sp. (strain D7).